Here is a 539-residue protein sequence, read N- to C-terminus: Phosphoenolpyruvate carboxykinase (ATP) (539 aa).

Substrate contacts are provided by arginine 64, tyrosine 206, and lysine 212. Residues lysine 212, histidine 231, and 247-255 (GLSGTGKTT) contribute to the ATP site. Lysine 212 and histidine 231 together coordinate Mn(2+). Aspartate 268 contacts Mn(2+). ATP-binding positions include glutamate 296, arginine 332, 448-449 (RI), and threonine 454. Arginine 332 serves as a coordination point for substrate.

It belongs to the phosphoenolpyruvate carboxykinase (ATP) family. In terms of assembly, monomer. Requires Mn(2+) as cofactor.

The protein resides in the cytoplasm. The catalysed reaction is oxaloacetate + ATP = phosphoenolpyruvate + ADP + CO2. Its pathway is carbohydrate biosynthesis; gluconeogenesis. Its function is as follows. Involved in the gluconeogenesis. Catalyzes the conversion of oxaloacetate (OAA) to phosphoenolpyruvate (PEP) through direct phosphoryl transfer between the nucleoside triphosphate and OAA. In Salmonella gallinarum (strain 287/91 / NCTC 13346), this protein is Phosphoenolpyruvate carboxykinase (ATP).